The following is a 390-amino-acid chain: E3 ubiquitin-protein ligase At4g11680 (390 aa).

The segment covering 1-19 (MSSSSSTTTNTTTESDSSS) has biased composition (low complexity). The interval 1–39 (MSSSSSTTTNTTTESDSSSLPTHIGRSNSDGIIDTTPFL) is disordered. A run of 5 helical transmembrane segments spans residues 109-129 (VVFL…AVLI), 142-162 (VWVV…CVEY), 212-232 (MFSF…GQTL), 244-264 (IIFL…ACVI), and 265-285 (GLAV…VADQ). The RING-type; atypical zinc finger occupies 338-379 (CCICLCEYEDGVELRELPCNHHFHCTCIDKWLHINSRCPLCK).

The protein localises to the membrane. The catalysed reaction is S-ubiquitinyl-[E2 ubiquitin-conjugating enzyme]-L-cysteine + [acceptor protein]-L-lysine = [E2 ubiquitin-conjugating enzyme]-L-cysteine + N(6)-ubiquitinyl-[acceptor protein]-L-lysine.. It functions in the pathway protein modification; protein ubiquitination. Mediates E2-dependent protein ubiquitination in vitro. This Arabidopsis thaliana (Mouse-ear cress) protein is E3 ubiquitin-protein ligase At4g11680.